The chain runs to 88 residues: SPbeta prophage-derived protein BhlB (88 aa).

Transmembrane regions (helical) follow at residues 15-35 and 45-65; these read LLAIALLNQIMVMLGKAAFII and DCLYTIFTIVFTTSTTTAAWF.

The protein belongs to the SPP1 holin family.

The protein resides in the cell membrane. Its function is as follows. May be involved in the secretion of the autolysin BlyA. The protein is SPbeta prophage-derived protein BhlB (bhlB) of Bacillus subtilis (strain 168).